We begin with the raw amino-acid sequence, 428 residues long: L-gulono-1,4-lactone dehydrogenase (428 aa).

The 168-residue stretch at 12–179 (QVCAPSAIVR…SQVTLQTVPL (168 aa)) folds into the FAD-binding PCMH-type domain.

The protein belongs to the oxygen-dependent FAD-linked oxidoreductase family. A divalent metal cation serves as cofactor.

It carries out the reaction L-gulono-1,4-lactone + 2 Fe(III)-[cytochrome c] = L-ascorbate + 2 Fe(II)-[cytochrome c] + 3 H(+). Its pathway is cofactor biosynthesis; L-ascorbate biosynthesis. In terms of biological role, oxidizes L-gulono-1,4-lactone to L-xylo-hexulonolactone which spontaneously isomerizes to L-ascorbate. This chain is L-gulono-1,4-lactone dehydrogenase, found in Mycobacterium tuberculosis (strain CDC 1551 / Oshkosh).